The following is a 311-amino-acid chain: Quinolinate synthase (311 aa).

Positions 25 and 42 each coordinate iminosuccinate. Cys87 serves as a coordination point for [4Fe-4S] cluster. Iminosuccinate is bound by residues 113 to 115 (YIN) and Ser130. Cys175 lines the [4Fe-4S] cluster pocket. Iminosuccinate contacts are provided by residues 201–203 (HPE) and Thr218. Cys268 serves as a coordination point for [4Fe-4S] cluster.

The protein belongs to the quinolinate synthase family. Type 2 subfamily. The cofactor is [4Fe-4S] cluster.

It localises to the cytoplasm. The catalysed reaction is iminosuccinate + dihydroxyacetone phosphate = quinolinate + phosphate + 2 H2O + H(+). It participates in cofactor biosynthesis; NAD(+) biosynthesis; quinolinate from iminoaspartate: step 1/1. Functionally, catalyzes the condensation of iminoaspartate with dihydroxyacetone phosphate to form quinolinate. The protein is Quinolinate synthase of Saccharolobus solfataricus (strain ATCC 35092 / DSM 1617 / JCM 11322 / P2) (Sulfolobus solfataricus).